We begin with the raw amino-acid sequence, 230 residues long: Dephospho-CoA kinase (230 aa).

The segment at methionine 1 to lysine 21 is disordered. A DPCK domain is found at valine 26–leucine 225. An ATP-binding site is contributed by glycine 34–alanine 39.

The protein belongs to the CoaE family.

The protein localises to the cytoplasm. It catalyses the reaction 3'-dephospho-CoA + ATP = ADP + CoA + H(+). It participates in cofactor biosynthesis; coenzyme A biosynthesis; CoA from (R)-pantothenate: step 5/5. In terms of biological role, catalyzes the phosphorylation of the 3'-hydroxyl group of dephosphocoenzyme A to form coenzyme A. This Psychrobacter cryohalolentis (strain ATCC BAA-1226 / DSM 17306 / VKM B-2378 / K5) protein is Dephospho-CoA kinase.